Here is a 997-residue protein sequence, read N- to C-terminus: Glutamate [NMDA] receptor subunit 1 (997 aa).

An N-terminal signal peptide occupies residues 1–26 (MAMAEFVFCRPLFGLAIVLLVAPIDA). Topologically, residues 27–573 (AQRHTASDNP…TLVSFLQPFS (547 aa)) are extracellular. Residues N258, N314, N345, N397, N454, N481, and N501 are each glycosylated (N-linked (GlcNAc...) asparagine). Residues 530–532 (PLT) and R537 each bind glycine. The chain crosses the membrane as a helical span at residues 574 to 594 (NTLWILVMVSVHVVALVLYLL). Residues 595–651 (DRFSPFGRFKLSHSDSNEEKALNLSSAVWFAWGVLLNSGIGEGTPRSFSARVLGMVW) are Cytoplasmic-facing. The chain crosses the membrane as a helical span at residues 652 to 672 (AGFAMIIVASYTANLAAFLVL). Topologically, residues 673-831 (ERPKTKLSGI…KTPNTLGLKN (159 aa)) are extracellular. N-linked (GlcNAc...) asparagine glycosylation is present at N693. Glycine-binding residues include S703 and D747. A helical membrane pass occupies residues 832–852 (MAGVFILVGVGIAGGVGLIII). The Cytoplasmic portion of the chain corresponds to 853–997 (EVIYKKHQVK…YTSDVSHLVV (145 aa)). The tract at residues 970-997 (LGKTRPQQSVLPPRYSPGYTSDVSHLVV) is disordered. Polar residues predominate over residues 987–997 (GYTSDVSHLVV).

Belongs to the glutamate-gated ion channel (TC 1.A.10.1) family. Forms a heteromeric NMDA channel with Nmdar2. As to expression, highly expressed in adult heads: in the brain and ring gland. Low expression throughout the entire brain is also seen. Higher expression levels were observed in some scattered cell bodies and part of their fibers, including those from several pairs of DPM (dorsal-posterior-medial) neurons surrounding the calyx, DAL (dorsal-anterior-lateral) and DPL (dorsal-posterior-lateral) neurons in the lateral protocerebrum (LP), VAL (ventral-anterior-lateral) neurons in the anterior protocerebrum, and two pairs of VP (ventral-posterior) neurons in the posterior protocerebrum. Many cell bodies in the optic lobes show preferential expression. Punctuate expression is notably detected in many brain regions including the superior medial protocerebrum. Weakly expressed in the antennal lobes and central complex.

It is found in the cell membrane. The protein resides in the postsynaptic cell membrane. The protein localises to the postsynaptic density. Functionally, NMDA receptor subtype of glutamate-gated ion channels with high calcium permeability and voltage-dependent sensitivity to magnesium. Mediated by glycine. This protein plays a key role in synaptic plasticity, synaptogenesis, excitotoxicity, memory acquisition and learning. It mediates neuronal functions in glutamate neurotransmission. Is involved in the cell surface targeting of NMDA receptors. Plays a role in associative learning and in long-term memory consolidation. This is Glutamate [NMDA] receptor subunit 1 from Drosophila melanogaster (Fruit fly).